Consider the following 513-residue polypeptide: MADKLMDKNFEELCYSCRTGDMDNVDRLISTGVNVNSVDKFDNSPLFLASLCGHEAVVKLLLQRGAVCDRDRYEGARCIYGALTDTIRDTLLSYDISKAVDVKQPFATHISSMYNDEGFLKRDITFRVSNGKLFTAHKFLLCARSEILAEKMVNEWAKHEIVSLEVRPDIFDIFLKFLYLIPILHQIEPGQYEELIELSSKFDIELLPEFLDKARHTADPTEKSRLMSDYQYKFTEVARSQLLIFVNNCIFRSTVDLANSERRVFSLMNCPAYPDVQLMVKNRNGAIRIYPCHLAVLSRAEYFKVMFTNNFKEKVTYIKAKHVTGKYNSIIPQLTLPNCEFEVAEIILRYLYADNTDIPWMYAVDVLLLADILLEDRLKTIASTIITQSKEFIQQYNVFDVLYLSWEIGVERLEQFAAKFIAIHLQELYKDPEIKRAIMLSSQRISLRQETDTIELVDDIRYYLLRKYSFEPDDVELFENQDDLEYLKQVGYLEYRKDMGMLDNILADLELDV.

2 ANK repeats span residues 8–37 (KNFE…NVNS) and 41–70 (FDNS…VCDR). BTB domains follow at residues 122–179 (RDIT…KFLY) and 274–360 (PDVQ…DIPW).

The sequence is that of Ankyrin repeat-containing protein YIL001W from Saccharomyces cerevisiae (strain ATCC 204508 / S288c) (Baker's yeast).